Here is a 393-residue protein sequence, read N- to C-terminus: NADH-quinone oxidoreductase subunit D 2 (393 aa).

Belongs to the complex I 49 kDa subunit family. As to quaternary structure, NDH-1 is composed of 14 different subunits. Subunits NuoB, C, D, E, F, and G constitute the peripheral sector of the complex.

Its subcellular location is the cell inner membrane. It catalyses the reaction a quinone + NADH + 5 H(+)(in) = a quinol + NAD(+) + 4 H(+)(out). Functionally, NDH-1 shuttles electrons from NADH, via FMN and iron-sulfur (Fe-S) centers, to quinones in the respiratory chain. The immediate electron acceptor for the enzyme in this species is believed to be a menaquinone. Couples the redox reaction to proton translocation (for every two electrons transferred, four hydrogen ions are translocated across the cytoplasmic membrane), and thus conserves the redox energy in a proton gradient. This is NADH-quinone oxidoreductase subunit D 2 from Cytophaga hutchinsonii (strain ATCC 33406 / DSM 1761 / CIP 103989 / NBRC 15051 / NCIMB 9469 / D465).